The primary structure comprises 552 residues: CTP synthase (552 aa).

The segment at 1–270 is amidoligase domain; that stretch reads MTKFVFVTGG…DGLICDKLRL (270 aa). CTP is bound at residue serine 13. Serine 13 is a binding site for UTP. ATP contacts are provided by residues 14–19 and aspartate 71; that span reads SLGKGI. Positions 71 and 144 each coordinate Mg(2+). Residues 151-153, 191-196, and lysine 227 contribute to the CTP site; these read DIE and KTKPTQ. Residues 191-196 and lysine 227 each bind UTP; that span reads KTKPTQ. Residues 295 to 548 form the Glutamine amidotransferase type-1 domain; it reads KIAMVGKYVE…VKAAIERQKA (254 aa). Glycine 357 is a binding site for L-glutamine. Catalysis depends on cysteine 384, which acts as the Nucleophile; for glutamine hydrolysis. Residues 385–388, glutamate 408, and arginine 474 contribute to the L-glutamine site; that span reads LGMQ. Residues histidine 521 and glutamate 523 contribute to the active site.

It belongs to the CTP synthase family. As to quaternary structure, homotetramer.

The catalysed reaction is UTP + L-glutamine + ATP + H2O = CTP + L-glutamate + ADP + phosphate + 2 H(+). It catalyses the reaction L-glutamine + H2O = L-glutamate + NH4(+). It carries out the reaction UTP + NH4(+) + ATP = CTP + ADP + phosphate + 2 H(+). The protein operates within pyrimidine metabolism; CTP biosynthesis via de novo pathway; CTP from UDP: step 2/2. Its activity is regulated as follows. Allosterically activated by GTP, when glutamine is the substrate; GTP has no effect on the reaction when ammonia is the substrate. The allosteric effector GTP functions by stabilizing the protein conformation that binds the tetrahedral intermediate(s) formed during glutamine hydrolysis. Inhibited by the product CTP, via allosteric rather than competitive inhibition. Functionally, catalyzes the ATP-dependent amination of UTP to CTP with either L-glutamine or ammonia as the source of nitrogen. Regulates intracellular CTP levels through interactions with the four ribonucleotide triphosphates. The protein is CTP synthase of Delftia acidovorans (strain DSM 14801 / SPH-1).